Reading from the N-terminus, the 156-residue chain is MPRRRVVGTRKILPDPKFGSEVLAKFVNVVMVDGKKSIAEKIVYGALEAAASKSGKVALDLFEVALENIRPSVEVKSRRVGGSTYQVPVEVRPSRRNALAMRWLVEASRKRGEKSMALRLAGELVDASDNKGSAVKKREDVHRMADANKAFAHYRW.

Belongs to the universal ribosomal protein uS7 family. Part of the 30S ribosomal subunit. Contacts proteins S9 and S11.

In terms of biological role, one of the primary rRNA binding proteins, it binds directly to 16S rRNA where it nucleates assembly of the head domain of the 30S subunit. Is located at the subunit interface close to the decoding center, probably blocks exit of the E-site tRNA. The polypeptide is Small ribosomal subunit protein uS7 (Psychromonas ingrahamii (strain DSM 17664 / CCUG 51855 / 37)).